The following is a 238-amino-acid chain: End-binding protein 1 (238 aa).

The region spanning 15–117 (FVGRVSLLKW…FFQWFKWFFD (103 aa)) is the Calponin-homology (CH) domain. The interval 101 to 238 (KYMDNFEFFQ…EDILYAEYHQ (138 aa)) is interaction with aurora kinase. Residues 124 to 165 (KSGATESGSANAVTKTSKPGNRSGSTAASMQNPKASSTSGPS) show a composition bias toward polar residues. The tract at residues 124–169 (KSGATESGSANAVTKTSKPGNRSGSTAASMQNPKASSTSGPSIDSK) is disordered. Residue S148 is modified to Phosphoserine. Residues 156–238 (PKASSTSGPS…EDILYAEYHQ (83 aa)) enclose the EB1 C-terminal domain.

It belongs to the MAPRE family. Homodimer; disulfide-linked and via interaction of the C-terminal EB1-specific domains. Interacts with BOP1 (via C-terminal WD repeats). Interacts with giardin subunit gamma, neurogenic locus notch homolog protein, GL50803_8358 and GL50803_11327. Interacts (via C-terminal residues 101-238) with aurora kinase. Interacts with tubulin gamma chain. Phosphorylated in vitro by aurora kinase. Phosphorylation is important for cell division.

The protein resides in the nucleus membrane. The protein localises to the cytoplasm. Its subcellular location is the cytoskeleton. It is found in the spindle. It localises to the nucleus envelope. The protein resides in the flagellum axoneme. The protein localises to the cell projection. Its subcellular location is the cilium. It is found in the flagellum. Involved in cell division. Involved in mitosis. Regulates dynamics of microtubules (MTs) during mitosis. Required for cytokinesis. Binds polymerized MTs in vitro. Is able to rescue a mitotic division defect, the proper positioning of the nucleus, of the S.cerevisiae BIM1 knockout mutant in a complementation assay. May play a role in spindle positioning and MT distribution. May be involved in MT nucleation for the formation of median bodies and in the biogenesis of flagella. Based on its localization to both the flagellar exit point and the distal flagellar tips, it may mediate the transition from anterograde to retrograde intraflagellar transport (IFT). The polypeptide is End-binding protein 1 (Giardia intestinalis (strain ATCC 50803 / WB clone C6) (Giardia lamblia)).